Here is a 213-residue protein sequence, read N- to C-terminus: Uracil phosphoribosyltransferase (213 aa).

5-phospho-alpha-D-ribose 1-diphosphate contacts are provided by residues R77, R102, and 129-137 (DPMLATGGS). Uracil-binding positions include I198 and 203-205 (GDA). D204 is a binding site for 5-phospho-alpha-D-ribose 1-diphosphate.

The protein belongs to the UPRTase family. Mg(2+) serves as cofactor.

The enzyme catalyses UMP + diphosphate = 5-phospho-alpha-D-ribose 1-diphosphate + uracil. The protein operates within pyrimidine metabolism; UMP biosynthesis via salvage pathway; UMP from uracil: step 1/1. Allosterically activated by GTP. Functionally, catalyzes the conversion of uracil and 5-phospho-alpha-D-ribose 1-diphosphate (PRPP) to UMP and diphosphate. This chain is Uracil phosphoribosyltransferase, found in Mycobacteroides abscessus (strain ATCC 19977 / DSM 44196 / CCUG 20993 / CIP 104536 / JCM 13569 / NCTC 13031 / TMC 1543 / L948) (Mycobacterium abscessus).